Reading from the N-terminus, the 203-residue chain is Large ribosomal subunit protein bL25 (203 aa).

It belongs to the bacterial ribosomal protein bL25 family. CTC subfamily. As to quaternary structure, part of the 50S ribosomal subunit; part of the 5S rRNA/L5/L18/L25 subcomplex. Contacts the 5S rRNA. Binds to the 5S rRNA independently of L5 and L18.

In terms of biological role, this is one of the proteins that binds to the 5S RNA in the ribosome where it forms part of the central protuberance. The protein is Large ribosomal subunit protein bL25 of Psychromonas ingrahamii (strain DSM 17664 / CCUG 51855 / 37).